Reading from the N-terminus, the 450-residue chain is Equilibrative nucleotide transporter 1 (450 aa).

Helical transmembrane passes span 63–83 (FAYI…NAFI), 101–121 (IFAV…VVFY), 133–153 (LGLL…LVYV), 168–188 (AAVA…IGVA), 196–216 (MQAV…LRIL), 234–254 (LYFA…NVAH), 300–320 (HGFG…GYIT), 334–354 (ILLI…TAVF), 361–381 (IAVG…GCLH), 394–414 (ILTC…MILA), and 430–450 (TVMF…FWVI).

Belongs to the SLC29A/ENT transporter (TC 2.A.57) family. In young seedlings, expressed in root elongation zone, root cortex, root-hair, at the transition to the shoot and cotyledons. Expressed in hydathodes of fully developed leaves and pollen.

It localises to the vacuole membrane. Functionally, nucleoside transporter involved in adenosine transport and required for nucleotide metabolism which influences growth and pollen germination. Has high affinity for adenosine when expressed in a heterologous system (yeast). The chain is Equilibrative nucleotide transporter 1 (ENT1) from Arabidopsis thaliana (Mouse-ear cress).